The following is a 229-amino-acid chain: Lantibiotic transport ATP-binding protein SrtF (229 aa).

Positions 2 to 225 (LKIQNLKKSY…EELFNNQILF (224 aa)) constitute an ABC transporter domain. Residue 34–41 (GPNGAGKS) coordinates ATP.

It belongs to the ABC transporter superfamily.

Implicated in the export process of the lantibiotic SrtA. The sequence is that of Lantibiotic transport ATP-binding protein SrtF (srtF) from Streptococcus pyogenes serotype M1.